Here is a 244-residue protein sequence, read N- to C-terminus: rRNA adenine N-6-methyltransferase (244 aa).

S-adenosyl-L-methionine-binding residues include N11, I13, G38, E59, D84, and S101.

The protein belongs to the class I-like SAM-binding methyltransferase superfamily. rRNA adenine N(6)-methyltransferase family.

In terms of biological role, involved in erythromycin resistance. In Lysinibacillus sphaericus (Bacillus sphaericus), this protein is rRNA adenine N-6-methyltransferase (ermG).